We begin with the raw amino-acid sequence, 75 residues long: Large ribosomal subunit protein bL31 (75 aa).

The Zn(2+) site is built by Cys-16, Cys-18, Cys-38, and Cys-41.

It belongs to the bacterial ribosomal protein bL31 family. Type A subfamily. In terms of assembly, part of the 50S ribosomal subunit. The cofactor is Zn(2+).

Functionally, binds the 23S rRNA. The chain is Large ribosomal subunit protein bL31 from Mycolicibacterium smegmatis (strain ATCC 700084 / mc(2)155) (Mycobacterium smegmatis).